The sequence spans 295 residues: ATP-dependent (S)-NAD(P)H-hydrate dehydratase (295 aa).

Positions leucine 9–leucine 289 constitute a YjeF C-terminal domain. (6S)-NADPHX-binding positions include glycine 109 and asparagine 162–arginine 168. ATP-binding positions include lysine 193–aspartate 197 and glycine 214–glycine 223. Aspartate 224 lines the (6S)-NADPHX pocket.

Belongs to the NnrD/CARKD family. Mg(2+) serves as cofactor.

It carries out the reaction (6S)-NADHX + ATP = ADP + phosphate + NADH + H(+). It catalyses the reaction (6S)-NADPHX + ATP = ADP + phosphate + NADPH + H(+). Catalyzes the dehydration of the S-form of NAD(P)HX at the expense of ATP, which is converted to ADP. Together with NAD(P)HX epimerase, which catalyzes the epimerization of the S- and R-forms, the enzyme allows the repair of both epimers of NAD(P)HX, a damaged form of NAD(P)H that is a result of enzymatic or heat-dependent hydration. In Anopheles darlingi (Mosquito), this protein is ATP-dependent (S)-NAD(P)H-hydrate dehydratase.